The primary structure comprises 628 residues: ATP-dependent zinc metalloprotease FtsH (628 aa).

Topologically, residues 1 to 7 are stromal; it reads MKLSWKT. Residues 8–28 traverse the membrane as a helical segment; it reads LLLWSLPIFVIGFFFWQGFLG. Topologically, residues 29–118 are lumenal; the sequence is PTTTDVGSNI…AHPPKSTSAV (90 aa). A helical transmembrane segment spans residues 119 to 139; it reads WGLLGNLLFPLLLVGGLAFLF. The Stromal portion of the chain corresponds to 140–628; that stretch reads RRSNNASGGP…PEKNYYISQF (489 aa). 213-220 contributes to the ATP binding site; sequence GPPGTGKT. His434 lines the Zn(2+) pocket. Glu435 is an active-site residue. Zn(2+)-binding residues include His438 and Asp512.

The protein in the central section; belongs to the AAA ATPase family. In the C-terminal section; belongs to the peptidase M41 family. Homohexamer. Requires Zn(2+) as cofactor.

It localises to the plastid. It is found in the chloroplast thylakoid membrane. In terms of biological role, acts as a processive, ATP-dependent zinc metallopeptidase. This Pyropia yezoensis (Susabi-nori) protein is ATP-dependent zinc metalloprotease FtsH.